Consider the following 199-residue polypeptide: Large ribosomal subunit protein bL9 (199 aa).

A disordered region spans residues 153-199 (KPVKASEKKGRRPRRDEEASDEQILAEENSVTEEAVSEEIQNSESEN).

The protein belongs to the bacterial ribosomal protein bL9 family.

Its function is as follows. Binds to the 23S rRNA. The protein is Large ribosomal subunit protein bL9 of Treponema denticola (strain ATCC 35405 / DSM 14222 / CIP 103919 / JCM 8153 / KCTC 15104).